The primary structure comprises 273 residues: Manganese catalase (273 aa).

Position 35 (E35) interacts with Mn(2+). Residues D57 and D61 each coordinate Ca(2+). Mn(2+) contacts are provided by E66, H69, E149, and H182. Residues N220, S222, and G224 each coordinate Ca(2+). The tract at residues 254–273 (EKPELKPAPPCVHNTLPGRE) is disordered.

Belongs to the manganese catalase family. In terms of assembly, homohexamer. Ca(2+) is required as a cofactor. Requires Mn(2+) as cofactor.

It carries out the reaction 2 H2O2 = O2 + 2 H2O. With respect to regulation, inhibited in the presence of EDTA. Resistant to inhibition by sodium azide. In terms of biological role, catalyzes the decomposition of hydrogen peroxide into water and oxygen. No significant activity could be detected with any of the other tested substrates, including glutathione, pyrogallol, NADH, NADPH and o-dianisidine. This chain is Manganese catalase, found in Bacillus subtilis.